The sequence spans 123 residues: Crossover junction endodeoxyribonuclease Hjc (123 aa).

Glu9 is a Mg(2+) binding site. Ser29 is an active-site residue. Residues Asp33 and Glu46 each contribute to the Mg(2+) site.

It belongs to the Holliday junction resolvase Hjc family. Homodimer. Probably interacts with PCNA and RadB. Mg(2+) serves as cofactor. The cofactor is Mn(2+).

It carries out the reaction Endonucleolytic cleavage at a junction such as a reciprocal single-stranded crossover between two homologous DNA duplexes (Holliday junction).. With respect to regulation, cleavage inhibited by RadB in the absence (but not presence) of ATP. Its function is as follows. A structure-specific endonuclease that resolves Holliday junction (HJ) intermediates during genetic recombination. Cleaves 4-way DNA junctions introducing paired nicks in opposing strands, leaving a 5'-terminal phosphate and a 3'-terminal hydroxyl group that are subsequently ligated to produce recombinant products. Cleaves both mobile and immobile junctions. Binds 4-way junction DNA, a synthetic Hj, binding is not competed by dsDNA. This Pyrococcus furiosus (strain ATCC 43587 / DSM 3638 / JCM 8422 / Vc1) protein is Crossover junction endodeoxyribonuclease Hjc.